Consider the following 108-residue polypeptide: MRMDEFYTKVYDAVCEIPYGKVSTYGEIARYVGMPSYARQVGQAMKHLHPETHVPWHRVINSRGTISKRDISAGEQRQKDRLEEEGVEIYQTSLGEYKLNLPEYMWKP.

It belongs to the MGMT family. ATL subfamily.

Functionally, involved in DNA damage recognition. Binds DNA containing O(6)-methylguanine and larger O(6)-alkylguanine adducts. The DNA is bent, the damaged base is rotated out of the DNA duplex into a hydrophobic binding pocket (nucleotide flipping), with Arg-39 donating a hydrogen bond to the orphaned cytosine to stabilize the extrahelical DNA conformation. This structural change in DNA presents the lesion to the nucleotide excision repair (NER) pathway. The affinity for O(6)-alkylguanine adducts increases with the size of the alkyl group. Low affinity small O(6)-alkylguanines are directed to the global genome repair pathway of NER via rhp7-rhp16 and rhp41-rhp23, while strong binding to bulky O(6)-alkylguanines stalls the transcription machinery and diverts the damage to the transcription-coupled repair pathway of NER via rhp26. In Schizosaccharomyces pombe (strain 972 / ATCC 24843) (Fission yeast), this protein is Alkyltransferase-like protein 1.